Consider the following 412-residue polypeptide: Arginine biosynthesis bifunctional protein ArgJ (412 aa).

Substrate is bound by residues threonine 155, lysine 181, threonine 192, glutamate 279, asparagine 407, and serine 412. Threonine 192 (nucleophile) is an active-site residue.

The protein belongs to the ArgJ family. In terms of assembly, heterotetramer of two alpha and two beta chains.

It localises to the cytoplasm. The enzyme catalyses N(2)-acetyl-L-ornithine + L-glutamate = N-acetyl-L-glutamate + L-ornithine. It carries out the reaction L-glutamate + acetyl-CoA = N-acetyl-L-glutamate + CoA + H(+). Its pathway is amino-acid biosynthesis; L-arginine biosynthesis; L-ornithine and N-acetyl-L-glutamate from L-glutamate and N(2)-acetyl-L-ornithine (cyclic): step 1/1. It participates in amino-acid biosynthesis; L-arginine biosynthesis; N(2)-acetyl-L-ornithine from L-glutamate: step 1/4. Catalyzes two activities which are involved in the cyclic version of arginine biosynthesis: the synthesis of N-acetylglutamate from glutamate and acetyl-CoA as the acetyl donor, and of ornithine by transacetylation between N(2)-acetylornithine and glutamate. The polypeptide is Arginine biosynthesis bifunctional protein ArgJ (Aromatoleum aromaticum (strain DSM 19018 / LMG 30748 / EbN1) (Azoarcus sp. (strain EbN1))).